The following is a 123-amino-acid chain: Molluscan insulin-related peptide 1 (123 aa).

An N-terminal signal peptide occupies residues 1–31 (MAGVRLVFTKAFMVTVLLTLLLNIGVKPAEG). At glutamine 32 the chain carries Pyrrolidone carboxylic acid. Cystine bridges form between cysteine 48-cysteine 109, cysteine 60-cysteine 122, and cysteine 108-cysteine 113. Positions 68 to 69 (MV) are excised as a propeptide. Glutamine 99 is subject to Pyrrolidone carboxylic acid.

This sequence belongs to the insulin family. As to quaternary structure, heterodimer of a B chain and an A chain linked by two disulfide bonds. As to expression, expressed in the cerebral light-green cells which are giant neuroendocrines cells involved in the control of growth.

It is found in the cytoplasmic vesicle. The protein localises to the secretory vesicle. The protein is Molluscan insulin-related peptide 1 of Lymnaea stagnalis (Great pond snail).